The primary structure comprises 334 residues: Holliday junction branch migration complex subunit RuvB (334 aa).

Residues 4–186 (ADRLIAPENP…FGITQRLEYY (183 aa)) are large ATPase domain (RuvB-L). Residues isoleucine 25, arginine 26, glycine 67, lysine 70, threonine 71, threonine 72, 133–135 (EDY), arginine 176, tyrosine 186, and arginine 223 each bind ATP. Threonine 71 lines the Mg(2+) pocket. Residues 187–257 (KIPDLQNIVQ…TADKALNMLD (71 aa)) are small ATPAse domain (RuvB-S). The tract at residues 260–334 (SKGFDYMDRK…RAYLHFGIEK (75 aa)) is head domain (RuvB-H). DNA-binding residues include arginine 315 and arginine 320.

This sequence belongs to the RuvB family. Homohexamer. Forms an RuvA(8)-RuvB(12)-Holliday junction (HJ) complex. HJ DNA is sandwiched between 2 RuvA tetramers; dsDNA enters through RuvA and exits via RuvB. An RuvB hexamer assembles on each DNA strand where it exits the tetramer. Each RuvB hexamer is contacted by two RuvA subunits (via domain III) on 2 adjacent RuvB subunits; this complex drives branch migration. In the full resolvosome a probable DNA-RuvA(4)-RuvB(12)-RuvC(2) complex forms which resolves the HJ.

It localises to the cytoplasm. It carries out the reaction ATP + H2O = ADP + phosphate + H(+). The RuvA-RuvB-RuvC complex processes Holliday junction (HJ) DNA during genetic recombination and DNA repair, while the RuvA-RuvB complex plays an important role in the rescue of blocked DNA replication forks via replication fork reversal (RFR). RuvA specifically binds to HJ cruciform DNA, conferring on it an open structure. The RuvB hexamer acts as an ATP-dependent pump, pulling dsDNA into and through the RuvAB complex. RuvB forms 2 homohexamers on either side of HJ DNA bound by 1 or 2 RuvA tetramers; 4 subunits per hexamer contact DNA at a time. Coordinated motions by a converter formed by DNA-disengaged RuvB subunits stimulates ATP hydrolysis and nucleotide exchange. Immobilization of the converter enables RuvB to convert the ATP-contained energy into a lever motion, pulling 2 nucleotides of DNA out of the RuvA tetramer per ATP hydrolyzed, thus driving DNA branch migration. The RuvB motors rotate together with the DNA substrate, which together with the progressing nucleotide cycle form the mechanistic basis for DNA recombination by continuous HJ branch migration. Branch migration allows RuvC to scan DNA until it finds its consensus sequence, where it cleaves and resolves cruciform DNA. The chain is Holliday junction branch migration complex subunit RuvB from Vibrio vulnificus (strain YJ016).